Consider the following 478-residue polypeptide: MGATKILMDSTHFNEIRSIIRSRSVAWDALARSEELSEIDASTAKALESILVKKNIGDGLSSSNNAHSGFKVNGKTLIPLIHLLSTSDNEDCKKSVQNLIAELLSSDKYGDDTVKFFQEDPKQLEQLFDVSLKGDFQTVLISGFNVVSLLVQNGLHNVKLVEKLLKNNNLINILQNIEQMDTCYVCIRLLQELAVIPEYRDVIWLHEKKFMPTLFKILQRATDSQLATRIVATNSNHLGIQLQYHSLLLIWLLTFNPVFANELVQKYLSDFLDLLKLVKITIKEKVSRLCISIILQCCSTRVKQHKKVIKQLLLLGNALPTVQSLSERKYSDEELRQDISNLKEILENEYQELTSFDEYVAELDSKLLCWSPPHVDNGFWSDNIDEFKKDNYKIFRQLIELLQAKVRNGDVNAKQEKIIIQVALNDITHVVELLPESIDVLDKTGGKADIMELLNHSDSRVKYEALKATQAIIGYTFK.

Belongs to the V-ATPase H subunit family. In terms of assembly, V-ATPase is a heteromultimeric enzyme composed of a peripheral catalytic V1 complex (components A to H) attached to an integral membrane V0 proton pore complex (components: a, c, c', c'', d, e, f and VOA1). Interacts with YND1.

The protein resides in the vacuole membrane. In terms of biological role, subunit of the V1 complex of vacuolar(H+)-ATPase (V-ATPase), a multisubunit enzyme composed of a peripheral complex (V1) that hydrolyzes ATP and a membrane integral complex (V0) that translocates protons. V-ATPase is responsible for acidifying and maintaining the pH of intracellular compartments. This subunit is essential for activity, but not assembly, of the enzyme complex. This subunit is also required for silencing the ATPase activity of V-ATPase when V1 is detached from V0. The sequence is that of V-type proton ATPase subunit H from Saccharomyces cerevisiae (strain ATCC 204508 / S288c) (Baker's yeast).